A 540-amino-acid polypeptide reads, in one-letter code: MRVAAATAAAGAGPAMAVWTRATKAGLVELLLRERWVRVVAELSGESLSLTGDAAAAELEPALGPAAAAFNGLPNGGGAGDSLPGSPSRGLGPPSPPAPPRGPAGEAGASPPVRRVRVVKQEAGGLGISIKGGRENRMPILISKIFPGLAADQSRALRLGDAILSVNGTDLRQATHDQAVQALKRAGKEVLLEVKFIREVTPYIKKPSLVSDLPWEGAAPQSPSFSGSEDSGSPKHQNSTKDRKIIPLKMCFAARNLSMPDLENRLIELHSPDSRNTLILRCKDTATAHSWFVAIHTNIMALLPQVLAELNAMLGATSTAGGSKEVKHIAWLAEQAKLDGGRQQWRPVLMAVTEKDLLLYDCMPWTRDAWASPCHSYPLVATRLVHSGSGCRSPSLGSDLTFATRTGSRQGIEMHLFRVETHRDLSSWTRILVQGCHAAAELIKEVSLGCMLNGQEVRLTIHYENGFTISRENGGSSSILYRYPFERLKMSADDGIRNLYLDFGGPEGELTMDLHSCPKPIVFVLHTFLSAKVTRMGLLV.

The tract at residues 73-114 (LPNGGGAGDSLPGSPSRGLGPPSPPAPPRGPAGEAGASPPVR) is disordered. Residues 81–92 (DSLPGSPSRGLG) show a composition bias toward low complexity. Residues 93–102 (PPSPPAPPRG) are compositionally biased toward pro residues. Phosphoserine occurs at positions 95, 110, 129, 211, 222, 233, 393, and 395. Residues 103–112 (PAGEAGASPP) show a composition bias toward low complexity. The 84-residue stretch at 115–198 (RVRVVKQEAG…EVLLEVKFIR (84 aa)) folds into the PDZ domain. 2 PH domains span residues 163 to 300 (ILSV…TNIM) and 325 to 437 (EVKH…QGCH). The interval 220–240 (PQSPSFSGSEDSGSPKHQNST) is disordered. Positions 222-231 (SPSFSGSEDS) are enriched in low complexity. Positions 484-540 (PFERLKMSADDGIRNLYLDFGGPEGELTMDLHSCPKPIVFVLHTFLSAKVTRMGLLV) constitute an SU domain. A calmodulin-binding region spans residues 518–540 (PKPIVFVLHTFLSAKVTRMGLLV).

Belongs to the syntrophin family. Monomer and homodimer. Interacts with the other members of the syntrophin family: SNTA1 and SNTB1; and with the sodium channel proteins SCN4A and SCN5A. Interacts with SAST, MAST205, microtubules and microtubule-associated proteins. Interacts with the dystrophin protein DMD and related proteins DTNA and UTRN, and with the neuroregulin receptor ERBB4. Interacts with PTPRN when phosphorylated, protecting PTPRN from protein cleavage by CAPN1. Dephosphorylation upon insulin stimulation disrupts the interaction with PTPRN and results in the cleavage of PTPRN. Interacts with DTNB. In terms of processing, phosphorylated. Partially dephosphorylated upon insulin stimulation. Ubiquitous. Isoform 1 is the predominant isoform. Weak level of isoform 2 is present in all tested tissues, except in liver and heart where it is highly expressed.

The protein localises to the membrane. The protein resides in the cytoplasmic vesicle. It is found in the secretory vesicle membrane. It localises to the cell junction. Its subcellular location is the cytoplasm. The protein localises to the cytoskeleton. Adapter protein that binds to and probably organizes the subcellular localization of a variety of membrane proteins. May link various receptors to the actin cytoskeleton and the dystrophin glycoprotein complex. May play a role in the regulation of secretory granules via its interaction with PTPRN. In Homo sapiens (Human), this protein is Beta-2-syntrophin (SNTB2).